The chain runs to 271 residues: uncharacterized protein (271 aa).

This is an uncharacterized protein from Mycobacterium tuberculosis (strain CDC 1551 / Oshkosh).